A 231-amino-acid polypeptide reads, in one-letter code: MKRAVVVFSGGQDSTTCLIQALQHYDDVHCITFDYGQRHRAEIDIARELSLKLGATAHKVLDVGLLNELATSSLTRDSIPVPDYDANAQGIPNTFVPGRNILFLTLASIYAYQVGAEAVITGVCETDFSGYPDCRDEFVKALNQAIVLGIARDIRFETPLMWLNKAETWALADYYQQLDTVRYHTLTCYNGIKGDGCGQCAACHLRANGLAQYQNDSAAVMASLKQKAGLR.

8–18 (FSGGQDSTTCL) contacts ATP. The Zn(2+) site is built by Cys188, Cys197, Cys200, and Cys203.

The protein belongs to the QueC family. Requires Zn(2+) as cofactor.

It catalyses the reaction 7-carboxy-7-deazaguanine + NH4(+) + ATP = 7-cyano-7-deazaguanine + ADP + phosphate + H2O + H(+). It participates in purine metabolism; 7-cyano-7-deazaguanine biosynthesis. Functionally, catalyzes the ATP-dependent conversion of 7-carboxy-7-deazaguanine (CDG) to 7-cyano-7-deazaguanine (preQ(0)). The chain is 7-cyano-7-deazaguanine synthase from Pectobacterium carotovorum subsp. carotovorum (strain PC1).